Consider the following 360-residue polypeptide: Protein Wnt-2 (360 aa).

The N-terminal stretch at 1 to 25 (MNAPLGGIWLWLPLLLTWLTPEVSS) is a signal peptide. Cystine bridges form between Cys76–Cys87, Cys127–Cys135, Cys137–Cys157, Cys206–Cys220, Cys208–Cys215, Cys278–Cys309, Cys294–Cys304, Cys308–Cys348, Cys324–Cys339, Cys326–Cys336, and Cys331–Cys332. The O-palmitoleoyl serine; by PORCN moiety is linked to residue Ser212. The N-linked (GlcNAc...) asparagine glycan is linked to Asn295.

It belongs to the Wnt family. Post-translationally, palmitoleoylation is required for efficient binding to frizzled receptors. Depalmitoleoylation leads to Wnt signaling pathway inhibition.

The protein resides in the secreted. The protein localises to the extracellular space. Its subcellular location is the extracellular matrix. Functionally, ligand for members of the frizzled family of seven transmembrane receptors. Functions in the canonical Wnt signaling pathway that results in activation of transcription factors of the TCF/LEF family. The sequence is that of Protein Wnt-2 (WNT2) from Dasypus novemcinctus (Nine-banded armadillo).